Consider the following 472-residue polypeptide: Putative F-box/LRR-repeat protein At5g54820 (472 aa).

One can recognise an F-box domain in the interval 6-54 (QDRLSSLPDILLIMIISFLPLKECVRTSVLSKRWRYLCLETTNLSFKES). 6 LRR repeats span residues 58 to 87 (NPDITDAEYSRIVAYRSFFCSVDKWVSITQ), 135 to 164 (NGDISYRHFMYTLPKSVYSLTTLESLKIYG), 183 to 208 (IGWVRLENLHSLLSKSPSLQSLSIKN), 225 to 250 (VIEHSDFSYMQCAFELPRIHSFKYSG), 283 to 308 (SSRISGEVISRIINDLRAAETLTVCP), and 338 to 363 (MHTKEFNGIILLLNNCPNLETLGFDI).

The polypeptide is Putative F-box/LRR-repeat protein At5g54820 (Arabidopsis thaliana (Mouse-ear cress)).